Here is a 464-residue protein sequence, read N- to C-terminus: Argininosuccinate lyase (464 aa).

The protein belongs to the lyase 1 family. Argininosuccinate lyase subfamily.

The protein localises to the cytoplasm. The catalysed reaction is 2-(N(omega)-L-arginino)succinate = fumarate + L-arginine. It functions in the pathway amino-acid biosynthesis; L-arginine biosynthesis; L-arginine from L-ornithine and carbamoyl phosphate: step 3/3. This Pseudomonas fluorescens (strain ATCC BAA-477 / NRRL B-23932 / Pf-5) protein is Argininosuccinate lyase.